We begin with the raw amino-acid sequence, 61 residues long: Small ribosomal subunit protein uS14C (61 aa).

Zn(2+) is bound by residues Cys-24, Cys-27, Cys-40, and Cys-43.

It belongs to the universal ribosomal protein uS14 family. Zinc-binding uS14 subfamily. Part of the 30S ribosomal subunit. Contacts proteins S3 and S10. Zn(2+) is required as a cofactor.

Binds 16S rRNA, required for the assembly of 30S particles and may also be responsible for determining the conformation of the 16S rRNA at the A site. This chain is Small ribosomal subunit protein uS14C, found in Enterococcus faecalis (strain ATCC 700802 / V583).